The sequence spans 612 residues: Sulfite reductase [NADPH] flavoprotein alpha-component (612 aa).

In terms of domain architecture, Flavodoxin-like spans 64 to 202 (VTLISASQTG…QAQQWRQQVV (139 aa)). FMN-binding positions include 70–75 (SQTGNA), 117–120 (STQG), and 153–162 (LGDTSYEHFC). One can recognise an FAD-binding FR-type domain in the interval 247–461 (TAPLTAQLSV…IEHNDNFRLP (215 aa)). Residues Thr-335, Lys-369, 399-402 (RLYS), 417-419 (TVG), Tyr-423, and 432-435 (GGAS) contribute to the FAD site. Residues 532–533 (SR), 538–542 (KIYVQ), and Asp-574 contribute to the NADP(+) site. FAD is bound at residue Tyr-612.

This sequence belongs to the NADPH-dependent sulphite reductase flavoprotein subunit CysJ family. It in the N-terminal section; belongs to the flavodoxin family. The protein in the C-terminal section; belongs to the flavoprotein pyridine nucleotide cytochrome reductase family. Alpha(8)-beta(8). The alpha component is a flavoprotein, the beta component is a hemoprotein. It depends on FAD as a cofactor. Requires FMN as cofactor.

The enzyme catalyses hydrogen sulfide + 3 NADP(+) + 3 H2O = sulfite + 3 NADPH + 4 H(+). Its pathway is sulfur metabolism; hydrogen sulfide biosynthesis; hydrogen sulfide from sulfite (NADPH route): step 1/1. Component of the sulfite reductase complex that catalyzes the 6-electron reduction of sulfite to sulfide. This is one of several activities required for the biosynthesis of L-cysteine from sulfate. The flavoprotein component catalyzes the electron flow from NADPH -&gt; FAD -&gt; FMN to the hemoprotein component. This is Sulfite reductase [NADPH] flavoprotein alpha-component from Yersinia pestis bv. Antiqua (strain Nepal516).